Here is a 434-residue protein sequence, read N- to C-terminus: D-amino acid dehydrogenase (434 aa).

Residue Val-3–Tyr-17 coordinates FAD.

It belongs to the DadA oxidoreductase family. Requires FAD as cofactor.

The enzyme catalyses a D-alpha-amino acid + A + H2O = a 2-oxocarboxylate + AH2 + NH4(+). It functions in the pathway amino-acid degradation; D-alanine degradation; NH(3) and pyruvate from D-alanine: step 1/1. In terms of biological role, oxidative deamination of D-amino acids. The chain is D-amino acid dehydrogenase from Pseudomonas entomophila (strain L48).